The chain runs to 325 residues: Peroxidase RIP1 (325 aa).

Positions 1–21 (MASSSPCQIFLVFVMVTLVTS) are cleaved as a signal peptide. Intrachain disulfides connect Cys38–Cys118, Cys71–Cys76, Cys125–Cys321, and Cys206–Cys231. The Proton acceptor role is filled by His69. Ca(2+) is bound by residues Asp70, Val73, Gly75, Asp77, and Ser79. Asn87 is a glycosylation site (N-linked (GlcNAc...) asparagine). Substrate is bound at residue Pro169. N-linked (GlcNAc...) asparagine glycosylation occurs at Asn174. His199 serves as a coordination point for heme b. Thr200 contacts Ca(2+). Residue Asn215 is glycosylated (N-linked (GlcNAc...) asparagine). Residues Asp244, Thr246, and Glu251 each coordinate Ca(2+).

Belongs to the peroxidase family. Classical plant (class III) peroxidase subfamily. Heme b is required as a cofactor. Ca(2+) serves as cofactor. Expressed in the differentiating root epidermis following inoculation with the bacterial symbiont Sinorhizobium meliloti.

It is found in the secreted. It catalyses the reaction 2 a phenolic donor + H2O2 = 2 a phenolic radical donor + 2 H2O. Functionally, removal of H(2)O(2), oxidation of toxic reductants, biosynthesis and degradation of lignin, suberization, auxin catabolism, response to environmental stresses such as wounding, pathogen attack and oxidative stress. These functions might be dependent on each isozyme/isoform in each plant tissue. This is Peroxidase RIP1 from Medicago truncatula (Barrel medic).